A 382-amino-acid chain; its full sequence is 2-epi-valiolone synthase (382 aa).

NAD(+) is bound by residues 92 to 95 (EKSK), 124 to 128 (GVVVD), 148 to 149 (TT), lysine 161, lysine 170, and 188 to 191 (HLRT). Residues glutamate 203, histidine 266, and histidine 283 each coordinate Zn(2+).

This sequence belongs to the sugar phosphate cyclases superfamily. EVS family. The cofactor is NAD(+). Co(2+) serves as cofactor. It depends on Zn(2+) as a cofactor.

The catalysed reaction is D-sedoheptulose 7-phosphate = 2-epi-valiolone + phosphate. In terms of biological role, catalyzes the conversion of sedoheptulose 7-phosphate to 2-epi-valiolone, which may serve as an alternative precursor for aminocyclitol biosynthesis. This chain is 2-epi-valiolone synthase, found in Actinosynnema mirum (strain ATCC 29888 / DSM 43827 / JCM 3225 / NBRC 14064 / NCIMB 13271 / NRRL B-12336 / IMRU 3971 / 101).